A 258-amino-acid chain; its full sequence is Enoyl-[acyl-carrier-protein] reductase [NADH] FabI (258 aa).

NAD(+)-binding positions include Gly-14, 20 to 21, 67 to 68, and Ile-95; these read SI and DV. Substrate is bound at residue Ala-98. Residues Tyr-148 and Tyr-158 each act as proton acceptor in the active site. NAD(+) contacts are provided by residues Lys-165 and 194 to 198; that span reads IRTLS.

It belongs to the short-chain dehydrogenases/reductases (SDR) family. FabI subfamily. As to quaternary structure, homotetramer.

It catalyses the reaction a 2,3-saturated acyl-[ACP] + NAD(+) = a (2E)-enoyl-[ACP] + NADH + H(+). It carries out the reaction (2E)-butenoyl-[ACP] + NADH + H(+) = butanoyl-[ACP] + NAD(+). Its pathway is lipid metabolism; fatty acid biosynthesis. Inhibited by triclosan and acrylamide. Its function is as follows. Catalyzes the reduction of a carbon-carbon double bond in an enoyl moiety that is covalently linked to an acyl carrier protein (ACP). Involved in the elongation cycle of fatty acid which are used in the lipid metabolism. The polypeptide is Enoyl-[acyl-carrier-protein] reductase [NADH] FabI (fabI) (Bacillus subtilis (strain 168)).